We begin with the raw amino-acid sequence, 521 residues long: Importin subunit alpha-4 (521 aa).

Residues 1–29 are disordered; sequence MAENPGLENHRIKSFKNKGRDVETMRRHR. Residue Ala-2 is modified to N-acetylalanine. The IBB domain maps to 2–58; the sequence is AENPGLENHRIKSFKNKGRDVETMRRHRNEVTVELRKNKRDEHLLKKRNVPQEESLE. Over residues 18–29 the composition is skewed to basic and acidic residues; it reads KGRDVETMRRHR. The short motif at 43 to 52 is the Nuclear localization signal element; the sequence is EHLLKKRNVP. 2 positions are modified to phosphoserine: Ser-56 and Ser-60. One copy of the ARM 1; truncated repeat lies at 66 to 106; sequence FKAQNVTLEAILQNATSDNPVVQLSAVQAARKLLSSDRNPP. 8 ARM repeats span residues 107–149, 150–194, 195–233, 234–278, 279–318, 319–360, 361–400, and 401–443; these read IDDL…TSAQ, TQAV…CRDY, VISL…NKDP, PPPM…EQIQ, MVID…TDEQ, TQVV…NQQQ, VQAV…ISGR, and KDQV…IMAG. Residues 137–229 are NLS binding site (major); it reads WALTNIASGT…VTWVIVNLCR (93 aa). Residues 306–394 form an NLS binding site (minor) region; the sequence is RAVGNIVTGT…QKEAAWAISN (89 aa). Residues 447–485 form an ARM 10; atypical repeat; sequence STIAEIIEECGGLEKIEVLQQHENEDIYKLAFEIIDQYF. Tyr-484 bears the Phosphotyrosine mark.

It belongs to the importin alpha family. Forms a complex with importin subunit beta-1. Interacts with DDX21. Interacts with NCBP1, NCBP2/CBP20 and NCBP3. Interacts with RCC1. Interacts with ZC3H11A. As to expression, detected more or less in all tissues examined (Ehrlich ascites tumor cells, testis, kidney, spleen, liver, heart, lung, thymus, skeletal muscle, cerebellum and brain (without cerebellum)).

Its subcellular location is the cytoplasm. The protein localises to the nucleus. Functions in nuclear protein import as an adapter protein for nuclear receptor KPNB1. Binds specifically and directly to substrates containing either a simple or bipartite NLS motif. Docking of the importin/substrate complex to the nuclear pore complex (NPC) is mediated by KPNB1 through binding to nucleoporin FxFG repeats and the complex is subsequently translocated through the pore by an energy requiring, Ran-dependent mechanism. At the nucleoplasmic side of the NPC, Ran binds to importin-beta and the three components separate and importin-alpha and -beta are re-exported from the nucleus to the cytoplasm where GTP hydrolysis releases Ran from importin. The directionality of nuclear import is thought to be conferred by an asymmetric distribution of the GTP- and GDP-bound forms of Ran between the cytoplasm and nucleus. In vitro, mediates the nuclear import of human cytomegalovirus UL84 by recognizing a non-classical NLS. The chain is Importin subunit alpha-4 (Kpna3) from Mus musculus (Mouse).